The primary structure comprises 435 residues: Rho GTPase-activating protein 4 (435 aa).

Residues methionine 1–glutamate 59 are disordered. Low complexity predominate over residues serine 7–serine 23. A CRIB domain is found at isoleucine 93–threonine 106. In terms of domain architecture, Rho-GAP spans valine 138–lysine 319. A disordered region spans residues serine 321–serine 343.

Its function is as follows. Acts as a GTPase activator for the Rac-type GTPase by converting it to an inactive GDP-bound state. Acts as a negative feedback regulator in tolerance to oxygen deprivation which requires ARAC4/ROP2. This Arabidopsis thaliana (Mouse-ear cress) protein is Rho GTPase-activating protein 4 (ROPGAP4).